The chain runs to 296 residues: L-isoleucine 3(1)-dioxygenase (296 aa).

Residues His-176, Asp-178, and His-267 each coordinate Fe cation.

It belongs to the iron/ascorbate-dependent oxidoreductase family. L-ascorbate serves as cofactor. Fe(2+) is required as a cofactor.

It carries out the reaction L-isoleucine + 2-oxoglutarate + O2 = 3(1)-hydroxy-L-isoleucine + succinate + CO2. Catalyzes the hydroxylation of L-isoleucine at the C-4' position to form L-4'-hydroxyisoleucine (4'-HIL). Exhibits low activity with L-valine and L-methionine. This Pantoea ananatis (strain AJ13355) protein is L-isoleucine 3(1)-dioxygenase.